Reading from the N-terminus, the 108-residue chain is Urease subunit beta (108 aa).

It belongs to the urease beta subunit family. Heterotrimer of UreA (gamma), UreB (beta) and UreC (alpha) subunits. Three heterotrimers associate to form the active enzyme.

The protein localises to the cytoplasm. The enzyme catalyses urea + 2 H2O + H(+) = hydrogencarbonate + 2 NH4(+). Its pathway is nitrogen metabolism; urea degradation; CO(2) and NH(3) from urea (urease route): step 1/1. The sequence is that of Urease subunit beta from Microcystis aeruginosa (strain NIES-843 / IAM M-2473).